Reading from the N-terminus, the 333-residue chain is 4-hydroxy-3-methylbut-2-enyl diphosphate reductase (333 aa).

Cys-20 is a [4Fe-4S] cluster binding site. (2E)-4-hydroxy-3-methylbut-2-enyl diphosphate-binding residues include His-49 and His-82. The dimethylallyl diphosphate site is built by His-49 and His-82. Residues His-49 and His-82 each contribute to the isopentenyl diphosphate site. [4Fe-4S] cluster is bound at residue Cys-104. His-132 serves as a coordination point for (2E)-4-hydroxy-3-methylbut-2-enyl diphosphate. His-132 serves as a coordination point for dimethylallyl diphosphate. Position 132 (His-132) interacts with isopentenyl diphosphate. The active-site Proton donor is the Glu-134. Residue Thr-172 participates in (2E)-4-hydroxy-3-methylbut-2-enyl diphosphate binding. Residue Cys-202 coordinates [4Fe-4S] cluster. (2E)-4-hydroxy-3-methylbut-2-enyl diphosphate contacts are provided by Ser-230, Ser-231, Asn-232, and Ser-274. Positions 230, 231, 232, and 274 each coordinate dimethylallyl diphosphate. Isopentenyl diphosphate-binding residues include Ser-230, Ser-231, Asn-232, and Ser-274.

Belongs to the IspH family. It depends on [4Fe-4S] cluster as a cofactor.

The enzyme catalyses isopentenyl diphosphate + 2 oxidized [2Fe-2S]-[ferredoxin] + H2O = (2E)-4-hydroxy-3-methylbut-2-enyl diphosphate + 2 reduced [2Fe-2S]-[ferredoxin] + 2 H(+). It catalyses the reaction dimethylallyl diphosphate + 2 oxidized [2Fe-2S]-[ferredoxin] + H2O = (2E)-4-hydroxy-3-methylbut-2-enyl diphosphate + 2 reduced [2Fe-2S]-[ferredoxin] + 2 H(+). It participates in isoprenoid biosynthesis; dimethylallyl diphosphate biosynthesis; dimethylallyl diphosphate from (2E)-4-hydroxy-3-methylbutenyl diphosphate: step 1/1. It functions in the pathway isoprenoid biosynthesis; isopentenyl diphosphate biosynthesis via DXP pathway; isopentenyl diphosphate from 1-deoxy-D-xylulose 5-phosphate: step 6/6. Functionally, catalyzes the conversion of 1-hydroxy-2-methyl-2-(E)-butenyl 4-diphosphate (HMBPP) into a mixture of isopentenyl diphosphate (IPP) and dimethylallyl diphosphate (DMAPP). Acts in the terminal step of the DOXP/MEP pathway for isoprenoid precursor biosynthesis. This is 4-hydroxy-3-methylbut-2-enyl diphosphate reductase from Polaromonas sp. (strain JS666 / ATCC BAA-500).